The following is a 932-amino-acid chain: Receptor-like protein 9a (932 aa).

The N-terminal stretch at 1-28 (MLIFTIPQFFFAAWVMVVSLQMQGYISC) is a signal peptide. Residues 29 to 888 (IEKERKGLLE…DDETAIDMET (860 aa)) lie on the Extracellular side of the membrane. Residues N53, N80, and N90 are each glycosylated (N-linked (GlcNAc...) asparagine). LRR repeat units follow at residues 97-122 (FEEL…GYKS), 126-152 (LKKL…AASS), 154-174 (RTLI…ELKD), 175-200 (LSNL…VLHK), 202-222 (HALD…GLCQ), 223-246 (LKNL…CFSS), 247-273 (LTQL…NLDS), 275-295 (EYLS…LIAN), 296-320 (LSKL…ISLQ), 322-345 (KFRL…LQQQ), 346-368 (KDLR…WFLE), 370-393 (YPKL…RLLV), 394-417 (HSLH…IGHV), 418-441 (LPNI…SFSE), 443-466 (KKIF…FCIG), 468-491 (SSLS…PMKL), 492-514 (ESLR…LIHS), 516-535 (GLVF…PSWF), 536-560 (GGFY…TLFN), 561-583 (VSFQ…HFSF), 585-605 (HMGL…STLL), 606-629 (ENVM…VSNR), 631-652 (FLYL…LCEL), 653-676 (KSIR…LNNV), 745-769 (FKFM…LGDF), 770-792 (QRIR…SFSN), 794-817 (TDIE…LTKL), and 819-842 (YIVV…KFLS). N140 carries N-linked (GlcNAc...) asparagine glycosylation. N-linked (GlcNAc...) asparagine glycans are attached at residues N261 and N295. N-linked (GlcNAc...) asparagine glycosylation is found at N352 and N380. N420, N425, and N454 each carry an N-linked (GlcNAc...) asparagine glycan. Residues N524, N551, and N560 are each glycosylated (N-linked (GlcNAc...) asparagine). N-linked (GlcNAc...) asparagine glycans are attached at residues N666 and N675. 2 N-linked (GlcNAc...) asparagine glycosylation sites follow: N776 and N792. Residues N824, N829, N860, and N866 are each glycosylated (N-linked (GlcNAc...) asparagine). Residues 889–909 (FYWSLFATYGITWMAFIVFLC) traverse the membrane as a helical segment. Residues 910 to 932 (FDSPWRQAWFRLVNVFVSFLKCV) lie on the Cytoplasmic side of the membrane.

It belongs to the RLP family.

The protein resides in the cell membrane. The polypeptide is Receptor-like protein 9a (Arabidopsis thaliana (Mouse-ear cress)).